Here is a 231-residue protein sequence, read N- to C-terminus: ATP-dependent dethiobiotin synthetase BioD (231 aa).

ATP is bound at residue 12–17 (DVGKTV). A Mg(2+)-binding site is contributed by threonine 16. The active site involves lysine 37. Position 41 (threonine 41) interacts with substrate. Residues aspartate 50, 109 to 112 (EGAG), 170 to 171 (GS), and 200 to 202 (PAG) contribute to the ATP site. Residues aspartate 50 and glutamate 109 each contribute to the Mg(2+) site.

It belongs to the dethiobiotin synthetase family. As to quaternary structure, homodimer. Requires Mg(2+) as cofactor.

The protein resides in the cytoplasm. It carries out the reaction (7R,8S)-7,8-diammoniononanoate + CO2 + ATP = (4R,5S)-dethiobiotin + ADP + phosphate + 3 H(+). It participates in cofactor biosynthesis; biotin biosynthesis; biotin from 7,8-diaminononanoate: step 1/2. Catalyzes a mechanistically unusual reaction, the ATP-dependent insertion of CO2 between the N7 and N8 nitrogen atoms of 7,8-diaminopelargonic acid (DAPA, also called 7,8-diammoniononanoate) to form a ureido ring. In Rhodococcus jostii (strain RHA1), this protein is ATP-dependent dethiobiotin synthetase BioD.